The primary structure comprises 154 residues: MAARLCCQLDPARDVLCLRPVGAESCGRPLSWSPGALPPPSPPSVPADDRAHLSLRGLPACAFSSAGPCALRFTSARRMETTVNAPQSLPTPLHKRTLGLSPRSTTWIEEYIKDCVFKDWEESGEELRLKVFVLGGCRHKLVCSPAPCNFFTSA.

The mitochondrial targeting sequence stretch occupies residues 68 to 117 (PCALRFTSARRMETTVNAPQSLPTPLHKRTLGLSPRSTTWIEEYIKDCVF).

The protein belongs to the orthohepadnavirus protein X family. In terms of assembly, may form homodimer. May interact with host CEBPA, CFLAR, CREB1, DDB1, E4F1, HBXIP, HSPD1/HSP60, NFKBIA, POLR2E and SMAD4. Interacts with host SMC5-SMC6 complex and induces its degradation. Interacts with host TRPC4AP; leading to prevent ubiquitination of TRPC4AP. Interacts with host PLSCR1; this interaction promotes ubiquitination and degradation of HBx and impairs HBx-mediated cell proliferation. Post-translationally, a fraction may be phosphorylated in insect cells and HepG2 cells, a human hepatoblastoma cell line. Phosphorylated in vitro by host protein kinase C or mitogen-activated protein kinase. N-acetylated in insect cells.

Its subcellular location is the host cytoplasm. The protein resides in the host nucleus. The protein localises to the host mitochondrion. Functionally, multifunctional protein that plays a role in silencing host antiviral defenses and promoting viral transcription. Does not seem to be essential for HBV infection. May be directly involved in development of cirrhosis and liver cancer (hepatocellular carcinoma). Most of cytosolic activities involve modulation of cytosolic calcium. The effect on apoptosis is controversial depending on the cell types in which the studies have been conducted. May induce apoptosis by localizing in mitochondria and causing loss of mitochondrial membrane potential. May also modulate apoptosis by binding host CFLAR, a key regulator of the death-inducing signaling complex (DISC). Promotes viral transcription by using the host E3 ubiquitin ligase DDB1 to target the SMC5-SMC6 complex to proteasomal degradation. This host complex would otherwise bind to viral episomal DNA, and prevents its transcription. Moderately stimulates transcription of many different viral and cellular transcription elements. Promoters and enhancers stimulated by HBx contain DNA binding sites for NF-kappa-B, AP-1, AP-2, c-EBP, ATF/CREB, or the calcium-activated factor NF-AT. The protein is Protein X of Homo sapiens (Human).